An 86-amino-acid polypeptide reads, in one-letter code: UPF0437 protein Ava_4254 (86 aa).

The protein belongs to the UPF0437 family.

The chain is UPF0437 protein Ava_4254 from Trichormus variabilis (strain ATCC 29413 / PCC 7937) (Anabaena variabilis).